The sequence spans 327 residues: Annexin A8-like protein 1 (327 aa).

Annexin repeat units lie at residues 21 to 92 (FNPD…ALMY), 93 to 164 (PPYR…CLLQ), 177 to 249 (ALAL…TVVK), and 253 to 324 (NLHS…SLVG). Positions 266, 268, 270, and 310 each coordinate Ca(2+).

The protein belongs to the annexin family.

This chain is Annexin A8-like protein 1, found in Homo sapiens (Human).